The sequence spans 431 residues: Histidine--tRNA ligase (431 aa).

The protein belongs to the class-II aminoacyl-tRNA synthetase family. Homodimer.

It localises to the cytoplasm. It catalyses the reaction tRNA(His) + L-histidine + ATP = L-histidyl-tRNA(His) + AMP + diphosphate + H(+). The sequence is that of Histidine--tRNA ligase from Neisseria meningitidis serogroup C / serotype 2a (strain ATCC 700532 / DSM 15464 / FAM18).